Here is a 371-residue protein sequence, read N- to C-terminus: MTFSPEPAHQHGQPPRTAILLINLGTPDAPTPKAVGRYLKAFLSDPRVVEIPRLAWLPILHGLILPFRSRASAMKYESIWLREAHMTGSPLLVYTERQAHALQLLMQQQGHDVTVACAMRYGNPSIESVMEALRRQGTEQILLLPLYPQFSGTTTATAFDEAFRVLSTWRNQPELRLVKHFHDHPAYISALHKQVGGYWAQHGKPDFARGDKLILSFHGLPRRLLDLGDPYHCECLKTGRLLGEALGLQPGQFQVTFQSRFGKAEWLQPYTAPTLAELGKVGTQRVDVFCPGFPADCIETLEEIAMEGQSEFRLAGGQDFHFIPCLNDAEAWIAGLADIALQHLQGWPLNVPHPHELEARRSRAQARGAGA.

Residues histidine 218 and glutamate 299 each coordinate Fe cation.

It belongs to the ferrochelatase family.

It is found in the cytoplasm. The catalysed reaction is heme b + 2 H(+) = protoporphyrin IX + Fe(2+). Its pathway is porphyrin-containing compound metabolism; protoheme biosynthesis; protoheme from protoporphyrin-IX: step 1/1. Its function is as follows. Catalyzes the ferrous insertion into protoporphyrin IX. This chain is Ferrochelatase, found in Cupriavidus metallidurans (strain ATCC 43123 / DSM 2839 / NBRC 102507 / CH34) (Ralstonia metallidurans).